Reading from the N-terminus, the 593-residue chain is UvrABC system protein C (593 aa).

The region spanning 14-91 (DSPGCYLHKD…IQENMPKYNI (78 aa)) is the GIY-YIG domain. In terms of domain architecture, UVR spans 196–231 (NKIVNGLTEKMKSAAMTMEFERAAEYRDLIEAISLL).

This sequence belongs to the UvrC family. As to quaternary structure, interacts with UvrB in an incision complex.

It localises to the cytoplasm. In terms of biological role, the UvrABC repair system catalyzes the recognition and processing of DNA lesions. UvrC both incises the 5' and 3' sides of the lesion. The N-terminal half is responsible for the 3' incision and the C-terminal half is responsible for the 5' incision. In Streptococcus agalactiae serotype V (strain ATCC BAA-611 / 2603 V/R), this protein is UvrABC system protein C.